We begin with the raw amino-acid sequence, 218 residues long: Small ribosomal subunit protein uS5 (218 aa).

The S5 DRBM domain occupies 55 to 118 (LDHEVIDVSI…RNAKLNIIPV (64 aa)).

Belongs to the universal ribosomal protein uS5 family. In terms of assembly, part of the 30S ribosomal subunit. Contacts protein S4.

In terms of biological role, with S4 and S12 plays an important role in translational accuracy. This Aeropyrum pernix (strain ATCC 700893 / DSM 11879 / JCM 9820 / NBRC 100138 / K1) protein is Small ribosomal subunit protein uS5.